We begin with the raw amino-acid sequence, 428 residues long: Enolase (428 aa).

Gln-163 contributes to the (2R)-2-phosphoglycerate binding site. Glu-205 acts as the Proton donor in catalysis. Mg(2+) contacts are provided by Asp-242, Glu-285, and Asp-312. (2R)-2-phosphoglycerate contacts are provided by Lys-337, Arg-366, Ser-367, and Lys-388. Catalysis depends on Lys-337, which acts as the Proton acceptor.

This sequence belongs to the enolase family. Mg(2+) is required as a cofactor.

It is found in the cytoplasm. It localises to the secreted. Its subcellular location is the cell surface. It catalyses the reaction (2R)-2-phosphoglycerate = phosphoenolpyruvate + H2O. The protein operates within carbohydrate degradation; glycolysis; pyruvate from D-glyceraldehyde 3-phosphate: step 4/5. Functionally, catalyzes the reversible conversion of 2-phosphoglycerate (2-PG) into phosphoenolpyruvate (PEP). It is essential for the degradation of carbohydrates via glycolysis. The chain is Enolase from Brevibacillus brevis (strain 47 / JCM 6285 / NBRC 100599).